A 727-amino-acid chain; its full sequence is Sodium-dependent neutral amino acid transporter SLC6A17 (727 aa).

Residues 1–69 (MPKNSKVTQR…RPAWNSKLQY (69 aa)) lie on the Cytoplasmic side of the membrane. A phosphoserine mark is found at S13 and S20. The helical transmembrane segment at 70 to 90 (ILAQIGFSVGLGNIWRFPYLC) threads the bilayer. The Extracellular segment spans residues 91-95 (QKNGG). Residues 96 to 116 (GAYLVPYLVLLIIIGIPLFFL) traverse the membrane as a helical segment. At 117-147 (ELAVGQRIRRGSIGVWHYICPRLGGIGFSSC) the chain is on the cytoplasmic side. The helical transmembrane segment at 148–168 (IVCLFVGLYYNVIIGWSIFYF) threads the bilayer. The Extracellular portion of the chain corresponds to 169–222 (FKSFQYPLPWSECPVVRNGSVAVVEAECEKSSATTYFWYREALDISDSISESGG). N186 is a glycosylation site (N-linked (GlcNAc...) asparagine). A helical membrane pass occupies residues 223–243 (LNWKMTLCLLVAWSIVGMAVV). Over 244–253 (KGIQSSGKVM) the chain is Cytoplasmic. Residues 254–274 (YFSSLFPYVVLACFLVRGLLL) traverse the membrane as a helical segment. At 275 to 300 (RGAVDGILHMFTPKLDKMLDPQVWRE) the chain is on the extracellular side. A helical membrane pass occupies residues 301-321 (AATQVFFALGLGFGGVIAFSS). Over 322-334 (YNKQDNNCHFDAA) the chain is Cytoplasmic. A helical transmembrane segment spans residues 335-355 (LVSFINFFTSVLATLVVFAVL). At 356-460 (GFKANIMNEK…HFPASPFWSV (105 aa)) the chain is on the extracellular side. Position 377 is a phosphotyrosine (Y377). N393 is a glycosylation site (N-linked (GlcNAc...) asparagine). A helical transmembrane segment spans residues 461-481 (MFFLMLINLGLGSMIGTMAGI). Residues 482–490 (TTPIIDTFK) are Cytoplasmic-facing. The chain crosses the membrane as a helical span at residues 491–511 (VPKEMFTVGCCVFAFLVGLLF). At 512–527 (VQRSGNYFVTMFDDYS) the chain is on the extracellular side. A helical membrane pass occupies residues 528-548 (ATLPLTLIVILENIAVAWIYG). Residues 549–573 (TKKFMQELTEMLGFRPYRFYFYMWK) lie on the Cytoplasmic side of the membrane. A helical transmembrane segment spans residues 574 to 594 (FVSPLCMAVLTTASIIQLGVT). Residues 595 to 617 (PPGYSAWIKEEAAERYLYFPNWA) are Extracellular-facing. A helical transmembrane segment spans residues 618–638 (MALLITLIVVATLPIPVVFVL). Topologically, residues 639–727 (RHFHLLSDGS…LLASTPESEL (89 aa)) are cytoplasmic. S665 and S701 each carry phosphoserine. Residues 680–727 (VPSEAPSPMPTHRSYLGPGSTSPLETSGNPNGRYGSGYLLASTPESEL) are disordered. Over residues 698–709 (GSTSPLETSGNP) the composition is skewed to polar residues.

The protein belongs to the sodium:neurotransmitter symporter (SNF) (TC 2.A.22) family.

The protein resides in the cytoplasmic vesicle. Its subcellular location is the secretory vesicle. It is found in the synaptic vesicle membrane. It localises to the postsynapse. The protein localises to the presynapse. The enzyme catalyses L-proline(in) + Na(+)(in) = L-proline(out) + Na(+)(out). It carries out the reaction L-leucine(in) + Na(+)(in) = L-leucine(out) + Na(+)(out). It catalyses the reaction glycine(in) + Na(+)(in) = glycine(out) + Na(+)(out). The catalysed reaction is L-alanine(in) + Na(+)(in) = L-alanine(out) + Na(+)(out). The enzyme catalyses L-glutamine(in) + Na(+)(in) = L-glutamine(out) + Na(+)(out). Functionally, synaptic vesicle transporter with apparent selectivity for neutral amino acids. The transport is sodium-coupled but chloride-independent, likely driven by the proton electrochemical gradient generated by vacuolar H(+)-ATPase in an overall electrogenic mechanism. May contribute to the synaptic uptake of neurotransmitter precursors in a process coupled in part to vesicle exocytosis. In Homo sapiens (Human), this protein is Sodium-dependent neutral amino acid transporter SLC6A17.